The chain runs to 226 residues: Respiratory nitrate reductase 2 gamma chain (226 aa).

Residues 1–4 (MIQY) are Periplasmic-facing. Residues 5-30 (LNVFFYDIYPYICATVFFLGSWLRYD) form a helical membrane-spanning segment. At 31 to 48 (YGQYTWRASSSQMLDKRG) the chain is on the cytoplasmic side. A helical transmembrane segment spans residues 49-71 (MVIWSNLFHIGILGIFFGHLFGM). Heme b-binding residues include His57 and His67. Over 72 to 83 (LTPHWMYAWFLP) the chain is Periplasmic. A helical membrane pass occupies residues 84–113 (VAAKQLMAMVLGGICGVLTLIGGAGLLWRR). The Cytoplasmic portion of the chain corresponds to 114–125 (LTNQRVRATSTT). The chain crosses the membrane as a helical span at residues 126–149 (PDIIIMSILLIQCLLGLSTIPFSA). The Periplasmic segment spans residues 150–183 (QYPDGSEMMKLVGWAQSIVTFRGGSSEMLNGVAF). A helical membrane pass occupies residues 184–199 (VFRLHLVLGMTIFLLF). Residues His188 and His206 each contribute to the heme b site. The Cytoplasmic portion of the chain corresponds to 200-226 (PFTRLVHVWSAPFEYFTRRYQIVRSRR).

As to quaternary structure, dimer of heterotrimers each composed of an alpha, a beta and a gamma chain. Alpha and beta are catalytic chains; gamma chains are involved in binding the enzyme complex to the cytoplasmic membrane. Requires heme as cofactor.

It is found in the cell inner membrane. The catalysed reaction is nitrate + a quinol = a quinone + nitrite + H2O. Functionally, this is a second nitrate reductase enzyme which can substitute for the NRA enzyme and allows E.coli to use nitrate as an electron acceptor during anaerobic growth. The gamma chain is a membrane-embedded heme-iron unit resembling cytochrome b, which transfers electrons from quinones to the beta subunit. This is Respiratory nitrate reductase 2 gamma chain (narV) from Escherichia coli (strain K12).